The following is a 570-amino-acid chain: MSEKHPGPLVVEGKLSDAERMKLESNYLRGTIVEDLNDGLTGGFKGDNFLLIRFHGMYQQDDRDIRAERAAQKLEPRHAMLLRCRLPGGVITTTQWQAIDKFAADNTIYGSIRLTNRQTFQFHGILKKNVKPVHQMLHSVGLDALATANDMNRNVLCTSNPYESQLHAEAYEWAKKISEHLLPRTRAYAEIWLDQEKVATTDEEPILGQTYLPRKFKTTVVIPPQNDIDLHANDMNFVAIAENGKLVGFNLLVGGGLSIEHGNKKTYARTASEFGYLPLEHTLAVAEAVVTTQRDWGNRTDRKNAKTKYTLERVGLETFKAEVERRAGITFEPIRPYEFTGRGDRIGWVKGIDDKWHLTLFIESGRILDYPGRPLKTGLLEIAKIHQGEFRITANQNLIIASVPESQKAKIETLARDHGLMNAVKPQRENSMACVSFPTCPLAMAEAERFLPSFTDKVEAILEKHGIPDEHIVMRVTGCPNGCGRAMLAEIGLVGKAPGRYNLHLGGNRIGSRIPRMYQENITEPDILASLDELIGRWAKEREAGEGFGDFTVRAGIIRPVLDPARDFWE.

[4Fe-4S] cluster-binding residues include Cys-434, Cys-440, Cys-479, and Cys-483. A siroheme-binding site is contributed by Cys-483.

It belongs to the nitrite and sulfite reductase 4Fe-4S domain family. Alpha(8)-beta(8). The alpha component is a flavoprotein, the beta component is a hemoprotein. Siroheme serves as cofactor. It depends on [4Fe-4S] cluster as a cofactor.

It carries out the reaction hydrogen sulfide + 3 NADP(+) + 3 H2O = sulfite + 3 NADPH + 4 H(+). Its pathway is sulfur metabolism; hydrogen sulfide biosynthesis; hydrogen sulfide from sulfite (NADPH route): step 1/1. In terms of biological role, component of the sulfite reductase complex that catalyzes the 6-electron reduction of sulfite to sulfide. This is one of several activities required for the biosynthesis of L-cysteine from sulfate. In Salmonella agona (strain SL483), this protein is Sulfite reductase [NADPH] hemoprotein beta-component.